We begin with the raw amino-acid sequence, 773 residues long: Molybdenum cofactor sulfurase (773 aa).

Lys243 is modified (N6-(pyridoxal phosphate)lysine). Residue Cys410 is part of the active site. The MOSC domain occupies 632–773 (LRLLRQSGQR…LSCGDTVLVE (142 aa)). Position 731 is a phosphoserine (Ser731).

Belongs to the class-V pyridoxal-phosphate-dependent aminotransferase family. MOCOS subfamily. It depends on pyridoxal 5'-phosphate as a cofactor.

It carries out the reaction Mo-molybdopterin + L-cysteine + AH2 = thio-Mo-molybdopterin + L-alanine + A + H2O. It functions in the pathway cofactor biosynthesis; molybdopterin biosynthesis. Functionally, sulfurates the molybdenum cofactor. Sulfation of molybdenum is essential for xanthine dehydrogenase (XDH) and aldehyde oxidase (ADO) enzymes in which molybdenum cofactor is liganded by 1 oxygen and 1 sulfur atom in active form. This Drosophila ananassae (Fruit fly) protein is Molybdenum cofactor sulfurase.